The following is a 189-amino-acid chain: Ion-translocating oxidoreductase complex subunit B (189 aa).

Positions 1-26 are hydrophobic; the sequence is MSGIFIAIILLTILALLFGILLGFAA. The region spanning 32–90 is the 4Fe-4S domain; sequence EGDPLVDQLEALLPQTQCGQCGYPGCRPYAEAIANGEKINLCPPGGSATMEKLAEMAGV. Positions 49, 52, 57, 73, 114, 117, 120, 124, 144, 147, 150, and 154 each coordinate [4Fe-4S] cluster. 2 consecutive 4Fe-4S ferredoxin-type domains span residues 105–134 and 135–164; these read KVAYIREEECIGCTKCIQACPVDAILGSGK and LMHTVITDYCTGCDLCVAPCPVDCIDMLPV.

It belongs to the 4Fe4S bacterial-type ferredoxin family. RnfB subfamily. As to quaternary structure, the complex is composed of six subunits: RnfA, RnfB, RnfC, RnfD, RnfE and RnfG. Requires [4Fe-4S] cluster as cofactor.

It is found in the cell inner membrane. Its function is as follows. Part of a membrane-bound complex that couples electron transfer with translocation of ions across the membrane. This Shewanella sediminis (strain HAW-EB3) protein is Ion-translocating oxidoreductase complex subunit B.